The sequence spans 385 residues: Acetate kinase (385 aa).

Asparagine 9 lines the Mg(2+) pocket. Lysine 16 contacts ATP. Position 75 (arginine 75) interacts with substrate. The active-site Proton donor/acceptor is the aspartate 132. ATP-binding positions include 192 to 196, 266 to 268, and 314 to 318; these read HLGNG, DFR, and GIGEN. Glutamate 368 contributes to the Mg(2+) binding site.

This sequence belongs to the acetokinase family. As to quaternary structure, homodimer. The cofactor is Mg(2+). Mn(2+) serves as cofactor.

It localises to the cytoplasm. The enzyme catalyses acetate + ATP = acetyl phosphate + ADP. It functions in the pathway metabolic intermediate biosynthesis; acetyl-CoA biosynthesis; acetyl-CoA from acetate: step 1/2. In terms of biological role, catalyzes the formation of acetyl phosphate from acetate and ATP. Can also catalyze the reverse reaction. The chain is Acetate kinase from Mycobacterium bovis (strain ATCC BAA-935 / AF2122/97).